We begin with the raw amino-acid sequence, 500 residues long: Lysine--tRNA ligase (500 aa).

Mg(2+) is bound by residues Glu410 and Glu417.

The protein belongs to the class-II aminoacyl-tRNA synthetase family. In terms of assembly, homodimer. Mg(2+) serves as cofactor.

It localises to the cytoplasm. The catalysed reaction is tRNA(Lys) + L-lysine + ATP = L-lysyl-tRNA(Lys) + AMP + diphosphate. The polypeptide is Lysine--tRNA ligase (Pseudomonas putida (strain ATCC 47054 / DSM 6125 / CFBP 8728 / NCIMB 11950 / KT2440)).